Consider the following 495-residue polypeptide: Lysine--tRNA ligase (495 aa).

Mg(2+) is bound by residues Glu406 and Glu413.

Belongs to the class-II aminoacyl-tRNA synthetase family. As to quaternary structure, homodimer. It depends on Mg(2+) as a cofactor.

Its subcellular location is the cytoplasm. The enzyme catalyses tRNA(Lys) + L-lysine + ATP = L-lysyl-tRNA(Lys) + AMP + diphosphate. The protein is Lysine--tRNA ligase of Leptospira interrogans serogroup Icterohaemorrhagiae serovar Lai (strain 56601).